The primary structure comprises 298 residues: Myozenin-1 (298 aa).

Residues 1-34 form a disordered region; the sequence is MPLSGTPAPNKKRKSSKLIMELTGGGQESSGLNL. A Phosphoserine modification is found at Ser-82. The disordered stretch occupies residues 105 to 173; it reads FSYSKGSSGG…TGTGDQAGGE (69 aa). The segment covering 118-129 has biased composition (low complexity); that stretch reads GSSSAGQYGSGQ. Residues 136 to 172 show a composition bias toward gly residues; it reads SGSGSGGAGGPGSQTGRGGDAGTTGVGETGTGDQAGG.

The protein belongs to the myozenin family. Interacts with ACTN2, ACTN3, FLNA, FLNB, FLNC, LDB3, PPP3CA and TCAP. Interacts via its C-terminal region with MYOT.

It localises to the nucleus. Its subcellular location is the cell projection. The protein localises to the pseudopodium. Functionally, myozenins may serve as intracellular binding proteins involved in linking Z-disk proteins such as alpha-actinin, gamma-filamin, TCAP/telethonin, LDB3/ZASP and localizing calcineurin signaling to the sarcomere. Plays an important role in the modulation of calcineurin signaling. May play a role in myofibrillogenesis. This is Myozenin-1 (MYOZ1) from Sus scrofa (Pig).